We begin with the raw amino-acid sequence, 190 residues long: GTP cyclohydrolase 1 (190 aa).

Residues C78, H81, and C150 each coordinate Zn(2+).

It belongs to the GTP cyclohydrolase I family. In terms of assembly, toroid-shaped homodecamer, composed of two pentamers of five dimers.

It carries out the reaction GTP + H2O = 7,8-dihydroneopterin 3'-triphosphate + formate + H(+). The protein operates within cofactor biosynthesis; 7,8-dihydroneopterin triphosphate biosynthesis; 7,8-dihydroneopterin triphosphate from GTP: step 1/1. Its activity is regulated as follows. K(+) ions moderately increases the Vmax, whereas UTP and Ca(2+) and Mg(2+) ions drastically increase the Km for GTP. The sequence is that of GTP cyclohydrolase 1 (folE) from Bacillus subtilis (strain 168).